A 193-amino-acid polypeptide reads, in one-letter code: dCTP deaminase (193 aa).

DCTP is bound by residues 110–115 (RSSLAR), D128, 136–138 (VLE), Y171, K178, and Q182. The Proton donor/acceptor role is filled by E138. A disordered region spans residues 169-193 (RPYNRRQDAKYRDQQGAVASRIDKD).

Belongs to the dCTP deaminase family. In terms of assembly, homotrimer.

It carries out the reaction dCTP + H2O + H(+) = dUTP + NH4(+). The protein operates within pyrimidine metabolism; dUMP biosynthesis; dUMP from dCTP (dUTP route): step 1/2. Functionally, catalyzes the deamination of dCTP to dUTP. In Salmonella paratyphi B (strain ATCC BAA-1250 / SPB7), this protein is dCTP deaminase.